The primary structure comprises 772 residues: Lon protease (772 aa).

A Lon N-terminal domain is found at 6 to 200; it reads YPTLPLKNTV…LMHRYLNHEV (195 aa). 352 to 359 contacts ATP; it reads GPPGVGKT. The Lon proteolytic domain occupies 588-769; the sequence is QLAPGVAAGL…EEVLAEAIPD (182 aa). Active-site residues include Ser675 and Lys718.

This sequence belongs to the peptidase S16 family. As to quaternary structure, homohexamer. Organized in a ring with a central cavity.

Its subcellular location is the cytoplasm. The catalysed reaction is Hydrolysis of proteins in presence of ATP.. Functionally, ATP-dependent serine protease that mediates the selective degradation of mutant and abnormal proteins as well as certain short-lived regulatory proteins. Required for cellular homeostasis and for survival from DNA damage and developmental changes induced by stress. Degrades polypeptides processively to yield small peptide fragments that are 5 to 10 amino acids long. Binds to DNA in a double-stranded, site-specific manner. This Nitrosococcus oceani (strain ATCC 19707 / BCRC 17464 / JCM 30415 / NCIMB 11848 / C-107) protein is Lon protease.